The primary structure comprises 490 residues: Aspartyl/glutamyl-tRNA(Asn/Gln) amidotransferase subunit B (490 aa).

Belongs to the GatB/GatE family. GatB subfamily. Heterotrimer of A, B and C subunits.

It carries out the reaction L-glutamyl-tRNA(Gln) + L-glutamine + ATP + H2O = L-glutaminyl-tRNA(Gln) + L-glutamate + ADP + phosphate + H(+). The enzyme catalyses L-aspartyl-tRNA(Asn) + L-glutamine + ATP + H2O = L-asparaginyl-tRNA(Asn) + L-glutamate + ADP + phosphate + 2 H(+). In terms of biological role, allows the formation of correctly charged Asn-tRNA(Asn) or Gln-tRNA(Gln) through the transamidation of misacylated Asp-tRNA(Asn) or Glu-tRNA(Gln) in organisms which lack either or both of asparaginyl-tRNA or glutaminyl-tRNA synthetases. The reaction takes place in the presence of glutamine and ATP through an activated phospho-Asp-tRNA(Asn) or phospho-Glu-tRNA(Gln). The protein is Aspartyl/glutamyl-tRNA(Asn/Gln) amidotransferase subunit B of Methylorubrum populi (strain ATCC BAA-705 / NCIMB 13946 / BJ001) (Methylobacterium populi).